The chain runs to 306 residues: Probable pinoresinol-lariciresinol reductase 3 (306 aa).

NADP(+) is bound by residues 14–20, Arg39, and Lys46; that span reads GATGRLG. Catalysis depends on Lys131, which acts as the Proton acceptor. Arg135 contacts NADP(+).

It belongs to the NmrA-type oxidoreductase family. Isoflavone reductase subfamily. As to quaternary structure, dimer.

Its function is as follows. Probable reductase that might be involved in the reduction of lariciresinol into secoisolariciresinol. In most plant species, a single enzyme is able to reduce both pinoresinol and lariciresinol efficiently while in Arabidopsis, PRR1 and PRR2 show a strict substrate selectivity for pinoresinol. In Arabidopsis thaliana (Mouse-ear cress), this protein is Probable pinoresinol-lariciresinol reductase 3 (PLR3).